The chain runs to 274 residues: Rhamnulose-1-phosphate aldolase (274 aa).

Glu-117 is an active-site residue. Residues His-141, His-143, and His-212 each contribute to the Zn(2+) site.

This sequence belongs to the aldolase class II family. RhaD subfamily. In terms of assembly, homotetramer. Zn(2+) is required as a cofactor.

It is found in the cytoplasm. The catalysed reaction is L-rhamnulose 1-phosphate = (S)-lactaldehyde + dihydroxyacetone phosphate. It participates in carbohydrate degradation; L-rhamnose degradation; glycerone phosphate from L-rhamnose: step 3/3. Functionally, catalyzes the reversible cleavage of L-rhamnulose-1-phosphate to dihydroxyacetone phosphate (DHAP) and L-lactaldehyde. This chain is Rhamnulose-1-phosphate aldolase, found in Pectobacterium atrosepticum (strain SCRI 1043 / ATCC BAA-672) (Erwinia carotovora subsp. atroseptica).